Here is a 213-residue protein sequence, read N- to C-terminus: Orotate phosphoribosyltransferase (213 aa).

Lys-26 lines the 5-phospho-alpha-D-ribose 1-diphosphate pocket. 34–35 contacts orotate; sequence FF. Residues 72–73, Arg-98, Lys-99, Lys-102, His-104, and 123–131 contribute to the 5-phospho-alpha-D-ribose 1-diphosphate site; these read YK and DDVISAGTS. Ser-127 and Arg-155 together coordinate orotate.

This sequence belongs to the purine/pyrimidine phosphoribosyltransferase family. PyrE subfamily. Homodimer. Requires Mg(2+) as cofactor.

It carries out the reaction orotidine 5'-phosphate + diphosphate = orotate + 5-phospho-alpha-D-ribose 1-diphosphate. The protein operates within pyrimidine metabolism; UMP biosynthesis via de novo pathway; UMP from orotate: step 1/2. Its function is as follows. Catalyzes the transfer of a ribosyl phosphate group from 5-phosphoribose 1-diphosphate to orotate, leading to the formation of orotidine monophosphate (OMP). This chain is Orotate phosphoribosyltransferase, found in Laribacter hongkongensis (strain HLHK9).